The following is a 620-amino-acid chain: Phosphopentomutase (620 aa).

Alpha-D-glucose 1,6-bisphosphate is bound by residues Arg71 and Ser173. Residue Ser173 is the Phosphoserine intermediate of the active site. Residues Ser173, Asp330, Asp332, and Asp334 each contribute to the Mg(2+) site. Position 173 is a phosphoserine (Ser173). Positions 334, 335, 408, 432, and 446 each coordinate alpha-D-glucose 1,6-bisphosphate.

The protein belongs to the phosphohexose mutase family. In terms of assembly, monomer. Requires Mg(2+) as cofactor. Highly expressed in lung, spleen and thymus. Expressed at lower levels in liver, brain, kidney, skeletal muscle, testis and heart.

It is found in the cytoplasm. The protein resides in the cytosol. It carries out the reaction alpha-D-ribose 1-phosphate = D-ribose 5-phosphate. It catalyses the reaction 2-deoxy-alpha-D-ribose 1-phosphate = 2-deoxy-D-ribose 5-phosphate. The enzyme catalyses alpha-D-glucose 1-phosphate = alpha-D-glucose 6-phosphate. The catalysed reaction is O-phospho-L-seryl-[protein] + alpha-D-glucose 1-phosphate = alpha-D-glucose 1,6-bisphosphate + L-seryl-[protein]. It carries out the reaction alpha-D-glucose 1,6-bisphosphate + L-seryl-[protein] = O-phospho-L-seryl-[protein] + alpha-D-glucose 6-phosphate. Functionally, catalyzes the conversion of the nucleoside breakdown products ribose-1-phosphate and deoxyribose-1-phosphate to the corresponding 5-phosphopentoses. Catalyzes the reversible isomerization of alpha-D-glucose 1-phosphate to alpha-D-glucose 6-phosphate but with a lower catalytic efficiency. The mechanism proceeds via the intermediate compound alpha-D-glucose 1,6-bisphosphate. In vitro, also has a low glucose 1,6-bisphosphate synthase activity which is most probably not physiologically relevant. This Mus musculus (Mouse) protein is Phosphopentomutase.